A 145-amino-acid polypeptide reads, in one-letter code: Putative pre-16S rRNA nuclease (145 aa).

This sequence belongs to the YqgF nuclease family.

It is found in the cytoplasm. In terms of biological role, could be a nuclease involved in processing of the 5'-end of pre-16S rRNA. This is Putative pre-16S rRNA nuclease from Opitutus terrae (strain DSM 11246 / JCM 15787 / PB90-1).